Consider the following 786-residue polypeptide: Succinoglycan biosynthesis transport protein ExoP (786 aa).

At 1 to 42 (MNRTAPMKQRSVPLSSIMPSEEQSDGFIDLDRLVAAVFRRAR) the chain is on the cytoplasmic side. Residues 43–66 (LVAAFVVLFIALGAAYLLFATPYY) form a helical membrane-spanning segment. At 67-689 (TSMTQILLDE…LIENARNAFD (623 aa)) the chain is on the periplasmic side. 583-590 (ALPDEGKS) contributes to the ATP binding site. The chain crosses the membrane as a helical span at residues 690–711 (YVVVDLAALAPVVDAKAFAPLA). The Cytoplasmic portion of the chain corresponds to 712–786 (DGILFVVEWG…ENTITENTAA (75 aa)).

To B.solanacearum EpsB.

It is found in the cell membrane. It participates in glycan metabolism; exopolysaccharide biosynthesis. The protein is Succinoglycan biosynthesis transport protein ExoP (exoP) of Rhizobium meliloti (strain 1021) (Ensifer meliloti).